We begin with the raw amino-acid sequence, 250 residues long: Silencing boundary-establishment protein FUB1 (250 aa).

The segment at 179-250 (PDWSGGLPNP…GFGGSGSGFI (72 aa)) is disordered. Basic and acidic residues predominate over residues 202–213 (PNRRPAPRREDM). The span at 229–250 (PGSGGFGGSGSGGFGGSGSGFI) shows a compositional bias: gly residues.

It belongs to the proteasome inhibitor PI31 family. In terms of assembly, interacts with the 20S proteasome.

In terms of biological role, plays a role in the establishment of transcriptional silencing boundaries, preventing the propagation of heterochromatic silencing. The chain is Silencing boundary-establishment protein FUB1 from Saccharomyces cerevisiae (strain ATCC 204508 / S288c) (Baker's yeast).